The following is a 317-amino-acid chain: TPR repeat-containing thioredoxin TDX (317 aa).

The tract at residues 1-48 (MATAGASSFEDEIMESDIELEGEAVEPDNDPPQKMGDPSVEVSDEKRD) is disordered. Residues 9 to 29 (FEDEIMESDIELEGEAVEPDN) show a composition bias toward acidic residues. TPR repeat units follow at residues 50-83 (AQLC…NPTS), 85-117 (IAYA…NPDS), and 119-151 (KGYK…DYDE). The 128-residue stretch at 189 to 316 (EKQRKHAEEV…LERKVAQHGS (128 aa)) folds into the Thioredoxin domain. Residues Cys-242 and Cys-245 each act as nucleophile in the active site. A disulfide bridge connects residues Cys-242 and Cys-245.

It belongs to the thioredoxin family.

Functionally, probable thiol-disulfide oxidoreductase that may participate in various redox reactions and act as chaperone under heat shock. May interact with HSP70 proteins through the TPR repeats. The polypeptide is TPR repeat-containing thioredoxin TDX (Oryza sativa subsp. japonica (Rice)).